Here is a 380-residue protein sequence, read N- to C-terminus: Large ribosomal subunit protein mL38 (380 aa).

The transit peptide at 1–26 (MAAPWWRVVLNGSRNWRGFSTSAALS) directs the protein to the mitochondrion. Positions 101–122 (QQLLERKRVLRELRTSVEEERA) form a coiled coil.

Belongs to the phosphatidylethanolamine-binding protein family. Mitochondrion-specific ribosomal protein mL38 subfamily. As to quaternary structure, component of the mitochondrial ribosome large subunit (39S) which comprises a 16S rRNA and about 50 distinct proteins.

The protein localises to the mitochondrion. The protein is Large ribosomal subunit protein mL38 (MRPL38) of Bos taurus (Bovine).